Consider the following 144-residue polypeptide: MELNTLAPAPGAKSSKKRVGRGIGSGLGKTGGRGHKGQKSRSGGSVKPGFEGGQMPIQRRLPKFGFTSRKAMVTAEVNLAEIAKVDGDTVELATLKAAGLVRKNVLHAKVIKSGELSRAVTVKGLKVTKGAREAIEAAGGKIEG.

The disordered stretch occupies residues 1-56 (MELNTLAPAPGAKSSKKRVGRGIGSGLGKTGGRGHKGQKSRSGGSVKPGFEGGQMP). A compositionally biased stretch (gly residues) spans 21 to 31 (RGIGSGLGKTG).

It belongs to the universal ribosomal protein uL15 family. In terms of assembly, part of the 50S ribosomal subunit.

In terms of biological role, binds to the 23S rRNA. The sequence is that of Large ribosomal subunit protein uL15 from Idiomarina loihiensis (strain ATCC BAA-735 / DSM 15497 / L2-TR).